Consider the following 143-residue polypeptide: Periplasmic nitrate reductase, electron transfer subunit (143 aa).

An N-terminal signal peptide occupies residues 1 to 22 (MKKILTLAAIVLAIGGCSGQQA). Heme c-binding residues include His-72, Cys-85, Cys-88, His-89, His-106, Cys-121, Cys-124, and His-125.

The protein belongs to the NapB family. As to quaternary structure, component of the periplasmic nitrate reductase NapAB complex composed of NapA and NapB. Binds 2 heme C groups per subunit.

The protein resides in the periplasm. In terms of biological role, electron transfer subunit of the periplasmic nitrate reductase complex NapAB. Receives electrons from the membrane-anchored tetraheme c-type CymA protein and transfers these to NapA subunit, thus allowing electron flow between membrane and periplasm. Not essential for nitrate reduction but confers advantage to the organism when grown on nitrate and thereby a fitness gain in utilizing nitrate. In Shewanella oneidensis (strain ATCC 700550 / JCM 31522 / CIP 106686 / LMG 19005 / NCIMB 14063 / MR-1), this protein is Periplasmic nitrate reductase, electron transfer subunit.